The primary structure comprises 201 residues: MAHQNEQRGGGDRGRGRGRGRDRDQERDDELVDKLVHINRVAKTVKGGRNFQFAALVVVGDTKGRVGFGQGKAREVPEAIRKATDEAKKNMIRVPLREGRTLHHDGKGRHGAGKVVLRAAPPGTGVIAGGPMRAVLETLGIQDVVAKSVGTSNPYNMIRATMDALKLQSSPRSVAAKRGLKVGDLVNRRDDGASSPEAIEA.

The disordered stretch occupies residues 1-28 (MAHQNEQRGGGDRGRGRGRGRDRDQERD). The S5 DRBM domain occupies 31-94 (LVDKLVHINR…DEAKKNMIRV (64 aa)). Positions 173-201 (SVAAKRGLKVGDLVNRRDDGASSPEAIEA) are disordered.

The protein belongs to the universal ribosomal protein uS5 family. In terms of assembly, part of the 30S ribosomal subunit. Contacts proteins S4 and S8.

Its function is as follows. With S4 and S12 plays an important role in translational accuracy. Located at the back of the 30S subunit body where it stabilizes the conformation of the head with respect to the body. The sequence is that of Small ribosomal subunit protein uS5 from Maricaulis maris (strain MCS10) (Caulobacter maris).